The following is a 303-amino-acid chain: Aspartate carbamoyltransferase catalytic subunit (303 aa).

Carbamoyl phosphate contacts are provided by Arg48 and Thr49. Lys76 provides a ligand contact to L-aspartate. Residues Arg98, His129, and Gln132 each contribute to the carbamoyl phosphate site. Arg162 and Arg214 together coordinate L-aspartate. Carbamoyl phosphate is bound by residues Ala257 and Pro258.

It belongs to the aspartate/ornithine carbamoyltransferase superfamily. ATCase family. In terms of assembly, heterododecamer (2C3:3R2) of six catalytic PyrB chains organized as two trimers (C3), and six regulatory PyrI chains organized as three dimers (R2).

The catalysed reaction is carbamoyl phosphate + L-aspartate = N-carbamoyl-L-aspartate + phosphate + H(+). It functions in the pathway pyrimidine metabolism; UMP biosynthesis via de novo pathway; (S)-dihydroorotate from bicarbonate: step 2/3. Functionally, catalyzes the condensation of carbamoyl phosphate and aspartate to form carbamoyl aspartate and inorganic phosphate, the committed step in the de novo pyrimidine nucleotide biosynthesis pathway. The protein is Aspartate carbamoyltransferase catalytic subunit of Leuconostoc citreum (strain KM20).